Consider the following 542-residue polypeptide: Phosphoenolpyruvate carboxykinase (ATP) (542 aa).

Substrate is bound by residues Arg-67, Tyr-208, and Lys-214. Residues Lys-214, His-233, and 249–257 (GLSGTGKTT) each bind ATP. Residues Lys-214 and His-233 each coordinate Mn(2+). Asp-270 is a Mn(2+) binding site. ATP is bound by residues Glu-298, Arg-334, 450-451 (RI), and Thr-456. Arg-334 provides a ligand contact to substrate.

Belongs to the phosphoenolpyruvate carboxykinase (ATP) family. Monomer. The cofactor is Mn(2+).

The protein localises to the cytoplasm. The catalysed reaction is oxaloacetate + ATP = phosphoenolpyruvate + ADP + CO2. It participates in carbohydrate biosynthesis; gluconeogenesis. In terms of biological role, involved in the gluconeogenesis. Catalyzes the conversion of oxaloacetate (OAA) to phosphoenolpyruvate (PEP) through direct phosphoryl transfer between the nucleoside triphosphate and OAA. This Vibrio campbellii (strain ATCC BAA-1116) protein is Phosphoenolpyruvate carboxykinase (ATP).